A 155-amino-acid polypeptide reads, in one-letter code: Small ribosomal subunit protein uS9 (155 aa).

It belongs to the universal ribosomal protein uS9 family.

In Allorhizobium ampelinum (strain ATCC BAA-846 / DSM 112012 / S4) (Agrobacterium vitis (strain S4)), this protein is Small ribosomal subunit protein uS9.